A 342-amino-acid chain; its full sequence is Alternative oxidase, mitochondrial (342 aa).

The N-terminal 20 residues, 1–20, are a transit peptide targeting the mitochondrion; that stretch reads MIKTYQYRSILNSRNVGIRF. The helical transmembrane segment at 135–155 threads the bilayer; sequence LTRCIFLESVAGVPGMVAAFI. Positions 142, 181, and 184 each coordinate Fe cation. A helical transmembrane segment spans residues 200-220; sequence FIIYMGQGVFANLFFLVYLIK. 3 residues coordinate Fe cation: Glu232, Glu287, and His290. 2 stretches are compositionally biased toward basic and acidic residues: residues 308–321 and 330–342; these read PFAL…KEQQ and PHPE…QMRL. Residues 308-342 form a disordered region; it reads PFALKVEDVPKEQQPDEYSLKTPHPEGWNREQMRL.

This sequence belongs to the alternative oxidase family. As to quaternary structure, homodimer; disulfide-linked. The cofactor is Fe cation.

It localises to the mitochondrion inner membrane. In terms of biological role, catalyzes cyanide-resistant oxygen consumption. May increase respiration when the cytochrome respiratory pathway is restricted, or in response to low temperatures. The sequence is that of Alternative oxidase, mitochondrial (AOX1) from Wickerhamomyces anomalus (Yeast).